We begin with the raw amino-acid sequence, 481 residues long: Histidine--tRNA ligase, cytoplasmic (481 aa).

Positions 1–48 (MSEPVVDNVTNKVEKMEVKEKTSAPPKEKKEKKSNKVQLKTPKGTQDY) are disordered. The segment covering 12–31 (KVEKMEVKEKTSAPPKEKKE) has biased composition (basic and acidic residues).

It belongs to the class-II aminoacyl-tRNA synthetase family.

It localises to the cytoplasm. It catalyses the reaction tRNA(His) + L-histidine + ATP = L-histidyl-tRNA(His) + AMP + diphosphate + H(+). This chain is Histidine--tRNA ligase, cytoplasmic (hisS), found in Dictyostelium discoideum (Social amoeba).